Reading from the N-terminus, the 352-residue chain is tRNA N6-adenosine threonylcarbamoyltransferase (352 aa).

Positions 109 and 113 each coordinate Fe cation. Residues 136-140 (TVSGG), Asp169, Gly182, Asp186, and Asn284 each bind substrate. Residue Asp312 participates in Fe cation binding.

This sequence belongs to the KAE1 / TsaD family. It depends on Fe(2+) as a cofactor.

The protein resides in the cytoplasm. The catalysed reaction is L-threonylcarbamoyladenylate + adenosine(37) in tRNA = N(6)-L-threonylcarbamoyladenosine(37) in tRNA + AMP + H(+). In terms of biological role, required for the formation of a threonylcarbamoyl group on adenosine at position 37 (t(6)A37) in tRNAs that read codons beginning with adenine. Is involved in the transfer of the threonylcarbamoyl moiety of threonylcarbamoyl-AMP (TC-AMP) to the N6 group of A37, together with TsaE and TsaB. TsaD likely plays a direct catalytic role in this reaction. The chain is tRNA N6-adenosine threonylcarbamoyltransferase from Chloroherpeton thalassium (strain ATCC 35110 / GB-78).